Here is a 279-residue protein sequence, read N- to C-terminus: MNIENKEITSSWFTNLRDLLCKEFEKIEEEYAQTKGLKPAKFVRSSWQRNGGGGGVMSLMKGAVFEKVGVNISTVFGKISSEFRNEIPGAELDGKFFATGISLVAHLKSPLIPAMHFNTRYIETSKSWFGGGGDLTPFYPEKNETVKFHAAFKEACDKYDSSYYPKFKKQCDEYFYLKHRKEPRGVGGIFYDYLNNGNFEQDFAFTQDVGKALLSVYPEIVRSKLFLPWTAEQKEYQLIRRGRYVEFNLLYDRGTKFGLMTDGNVEAILMSLPPEVKFN.

Substrate is bound at residue Ser102. Residues His106 and His116 each coordinate a divalent metal cation. The active-site Proton donor is His116. Position 118–120 (118–120 (NTR)) interacts with substrate. 2 residues coordinate a divalent metal cation: His149 and His179. Positions 244 to 279 (YVEFNLLYDRGTKFGLMTDGNVEAILMSLPPEVKFN) are important for dimerization.

It belongs to the aerobic coproporphyrinogen-III oxidase family. As to quaternary structure, homodimer. A divalent metal cation serves as cofactor.

The protein localises to the cytoplasm. The catalysed reaction is coproporphyrinogen III + O2 + 2 H(+) = protoporphyrinogen IX + 2 CO2 + 2 H2O. It functions in the pathway porphyrin-containing compound metabolism; protoporphyrin-IX biosynthesis; protoporphyrinogen-IX from coproporphyrinogen-III (O2 route): step 1/1. Functionally, involved in the heme biosynthesis. Catalyzes the aerobic oxidative decarboxylation of propionate groups of rings A and B of coproporphyrinogen-III to yield the vinyl groups in protoporphyrinogen-IX. This Rickettsia africae (strain ESF-5) protein is Oxygen-dependent coproporphyrinogen-III oxidase.